The primary structure comprises 750 residues: Serine/threonine-protein kinase GE16371 (750 aa).

Doublecortin domains lie at 159-245 and 315-398; these read LRIK…VEYN and RIVT…AEDF. A Protein kinase domain is found at 479–737; it reads YTLGKIIGDG…SEDILDHYWT (259 aa). ATP-binding positions include 485-493 and K508; that span reads IGDGNFAIV. D600 (proton acceptor) is an active-site residue.

Belongs to the protein kinase superfamily. CAMK Ser/Thr protein kinase family. CaMK subfamily.

It carries out the reaction L-seryl-[protein] + ATP = O-phospho-L-seryl-[protein] + ADP + H(+). The catalysed reaction is L-threonyl-[protein] + ATP = O-phospho-L-threonyl-[protein] + ADP + H(+). The chain is Serine/threonine-protein kinase GE16371 from Drosophila yakuba (Fruit fly).